Reading from the N-terminus, the 430-residue chain is Putative golgin subfamily A member 8D (430 aa).

The stretch at 2 to 217 (EWKLEQSMRE…LTAQLSLMAL (216 aa)) forms a coiled coil. 4 disordered regions span residues 138-158 (LREQ…QEER), 217-239 (LPGE…RPMP), 290-331 (PITK…GVAA), and 382-406 (PVQG…QDHQ). Basic and acidic residues predominate over residues 222–235 (HGGEHLDSEGEEAP). A compositionally biased stretch (gly residues) spans 303–316 (PGGGHHQAGPGQGG).

The protein belongs to the GOLGA8 family.

The polypeptide is Putative golgin subfamily A member 8D (GOLGA8DP) (Homo sapiens (Human)).